The primary structure comprises 267 residues: Probable membrane transporter protein MJ0441 (267 aa).

A run of 7 helical transmembrane segments spans residues 10 to 30 (LLLLPLLIIVGFIVGILGSLF), 31 to 51 (GIGGGFLVAPILTFIFDYFGI), 55 to 75 (VKFAVGTSLFVVFINSIISIF), 87 to 107 (ASITIGIISLVFSYFSGFLVV), 158 to 178 (FLSGLFGIGGGIVIIPILAMA), 185 to 205 (AVAISVGVIPLTSIGGLISYL), and 213 to 233 (IYNIGYVSIPIALIMAIPIIY).

This sequence belongs to the 4-toluene sulfonate uptake permease (TSUP) (TC 2.A.102) family.

It localises to the cell membrane. This is Probable membrane transporter protein MJ0441 from Methanocaldococcus jannaschii (strain ATCC 43067 / DSM 2661 / JAL-1 / JCM 10045 / NBRC 100440) (Methanococcus jannaschii).